The following is a 758-amino-acid chain: 5-methyltetrahydropteroyltriglutamate--homocysteine methyltransferase (758 aa).

Residues 17–20 (RELK) and K117 contribute to the 5-methyltetrahydropteroyltri-L-glutamate site. Residues 434-436 (IGS) and E487 each bind L-homocysteine. L-methionine contacts are provided by residues 434 to 436 (IGS) and E487. Residues 518–519 (RC) and W564 contribute to the 5-methyltetrahydropteroyltri-L-glutamate site. D602 is an L-homocysteine binding site. Residue D602 participates in L-methionine binding. E608 provides a ligand contact to 5-methyltetrahydropteroyltri-L-glutamate. Positions 644, 646, and 668 each coordinate Zn(2+). The active-site Proton donor is the H697. C729 contributes to the Zn(2+) binding site.

It belongs to the vitamin-B12 independent methionine synthase family. The cofactor is Zn(2+).

The catalysed reaction is 5-methyltetrahydropteroyltri-L-glutamate + L-homocysteine = tetrahydropteroyltri-L-glutamate + L-methionine. It functions in the pathway amino-acid biosynthesis; L-methionine biosynthesis via de novo pathway; L-methionine from L-homocysteine (MetE route): step 1/1. Catalyzes the transfer of a methyl group from 5-methyltetrahydrofolate to homocysteine resulting in methionine formation. The sequence is that of 5-methyltetrahydropteroyltriglutamate--homocysteine methyltransferase from Serratia proteamaculans (strain 568).